Reading from the N-terminus, the 601-residue chain is Glutamyl-tRNA(Gln) amidotransferase subunit B, mitochondrial (601 aa).

The transit peptide at 1-52 directs the protein to the mitochondrion; it reads MLQQWLRQSPRAARVLRGSCCRGPQSGSLRHSPLPTAPHRCIRSLQTSATES.

It belongs to the GatB/GatE family. GatB subfamily. As to quaternary structure, subunit of the heterotrimeric GatCAB amidotransferase (AdT) complex, composed of A, B and C subunits.

The protein resides in the mitochondrion. It catalyses the reaction L-glutamyl-tRNA(Gln) + L-glutamine + ATP + H2O = L-glutaminyl-tRNA(Gln) + L-glutamate + ADP + phosphate + H(+). Functionally, allows the formation of correctly charged Gln-tRNA(Gln) through the transamidation of misacylated Glu-tRNA(Gln) in the mitochondria. The reaction takes place in the presence of glutamine and ATP through an activated gamma-phospho-Glu-tRNA(Gln). The protein is Glutamyl-tRNA(Gln) amidotransferase subunit B, mitochondrial of Aspergillus fumigatus (strain ATCC MYA-4609 / CBS 101355 / FGSC A1100 / Af293) (Neosartorya fumigata).